A 399-amino-acid polypeptide reads, in one-letter code: MAREKFERNKPHVNIGTIGHVDHGKTTLTAAITNVLAKKGQAQAQDYGDIDGAPEERERGITINTAHVEYETEGRHYAHVDCPGHADYVKNMITGAAQMDGAILVCAATDGPMAQTKEHILLAKQVGVPALVVALNKCDMVDDEEIIELVEMEIRELLDSYDFPGDDIPIVQVSGLKALEGDTTWESKIEELMKAVDASIPEPEREVDKPFLMAVEDVFSITGRGTVATGRIERGKVKVGEEVEIVGIRDTRVTTVTGVEMFRKLLDEGMAGDNVGLLLRGVQKEDIERGMVLVKKGSITPHTQFEGEVYVLKKEEGGRHTPFFAGYRPQFYIRTTDVTGQITAFTSDDGSNVEMVMPGDRIKMTGELICPVAIEQGMRFAIREGGRTIGAGVVSKILK.

The 195-residue stretch at 10–204 (KPHVNIGTIG…AVDASIPEPE (195 aa)) folds into the tr-type G domain. The tract at residues 19-26 (GHVDHGKT) is G1. GTP is bound at residue 19–26 (GHVDHGKT). A Mg(2+)-binding site is contributed by T26. The G2 stretch occupies residues 60–64 (GITIN). The interval 81–84 (DCPG) is G3. Residues 81–85 (DCPGH) and 136–139 (NKCD) contribute to the GTP site. Positions 136–139 (NKCD) are G4. The interval 174–176 (SGL) is G5.

It belongs to the TRAFAC class translation factor GTPase superfamily. Classic translation factor GTPase family. EF-Tu/EF-1A subfamily. In terms of assembly, monomer.

It is found in the cytoplasm. The enzyme catalyses GTP + H2O = GDP + phosphate + H(+). Functionally, GTP hydrolase that promotes the GTP-dependent binding of aminoacyl-tRNA to the A-site of ribosomes during protein biosynthesis. The protein is Elongation factor Tu of Prochlorococcus marinus (strain AS9601).